We begin with the raw amino-acid sequence, 740 residues long: MENETHYAEAVIDNGAFGTRTIRFETGRLAKQAAGSAVAYLDDDTMVLSATTASKNPKDQLDFFPLTVDVEERMYAAGKIPGSFFRREGRPSEDAILTCRLIDRPLRPSFKKGLRNEIQVVATIMALNPDHLYDVVAINAASASTQLAGLPFSGPYGGVRVALIRGQWVAFPTHTELEDAVFDMVVAGRVLEDGDVAIMMVEAEATEKTVQLVKDGAEAPTEEVVAAGLDAAKPFIKVLCKAQADLAAKAAKPTGEFPVPSSTTRTTSEALSAAVRPELSAALTIAGKQDREAELDRVKALAAEKLLPEFEGREKEISAAYRPWPSSSSAERVIKEKKRIDGRGVTDIRTLAAEVEAIPRVHGSALFERGETQILGVTTLNMLRMEQQLDTLSPVTRKPYMHNYNFPPISVGETGRVGSPKRREIGHGALAERAIVPVLPTREEFPYAIRQVSEALGSNGSTSMGSVCASTMSLLNAGVPLKAPVAGIAMGLISQEINGETHYVALTDILGAEDAFGDMDFKVAGTKEFVTALQLDTKLDGIPASVLAAALKQARDARLHILDVMMEAIDTPDEMSPNAPRIITVKIPVDKIGEVIGPKRQMINQIQEDTGAEITIEDDGTIYIGAADGPAAEAARATINGIANPTSPEVGERILGSVVKTTTFGAFVSLLPGKDGLLHISQIRKLAGGKRVENVEDVLGVGQKVQVEIAEIDSRGKLSLIPVIEGEEAASDEKKDDAEQ.

D514 and D520 together coordinate Mg(2+). Residues 580-639 form the KH domain; the sequence is PRIITVKIPVDKIGEVIGPKRQMINQIQEDTGAEITIEDDGTIYIGAADGPAAEAARATI. One can recognise an S1 motif domain in the interval 651–723; the sequence is GERILGSVVK…SRGKLSLIPV (73 aa).

Belongs to the polyribonucleotide nucleotidyltransferase family. As to quaternary structure, homotrimer. Mg(2+) is required as a cofactor.

The protein resides in the cytoplasm. The enzyme catalyses RNA(n+1) + phosphate = RNA(n) + a ribonucleoside 5'-diphosphate. Functionally, involved in mRNA degradation. Catalyzes the phosphorolysis of single-stranded polyribonucleotides processively in the 3'- to 5'-direction. The protein is Polyribonucleotide nucleotidyltransferase of Streptomyces antibioticus.